A 2176-amino-acid chain; its full sequence is Protein eyes shut (2176 aa).

The Cytoplasmic portion of the chain corresponds to 1–122 (MSNVHQFDTQ…NPNILLPTLR (122 aa)). A helical membrane pass occupies residues 123–143 (ILARGLLLPALILAILVGSSQ). In terms of domain architecture, EGF-like 1 spans 144 to 180 (AGFACLSNPCVFGVCIDGLNSSYSCYCIDGYTGIQCQ). Residues 144–2176 (AGFACLSNPC…DLHGDEPLTV (2033 aa)) are Extracellular-facing. Disulfide bonds link cysteine 148–cysteine 158, cysteine 153–cysteine 168, cysteine 170–cysteine 179, cysteine 186–cysteine 197, cysteine 191–cysteine 206, cysteine 208–cysteine 217, cysteine 224–cysteine 235, cysteine 229–cysteine 244, cysteine 246–cysteine 255, cysteine 262–cysteine 276, cysteine 270–cysteine 286, cysteine 288–cysteine 297, cysteine 304–cysteine 315, cysteine 309–cysteine 324, cysteine 326–cysteine 335, cysteine 342–cysteine 353, cysteine 347–cysteine 362, cysteine 364–cysteine 373, cysteine 380–cysteine 392, cysteine 386–cysteine 401, and cysteine 403–cysteine 412. Asparagine 163 carries an N-linked (GlcNAc...) asparagine glycan. Residues 182–218 (NWDECWSSPCQNGGTCVDGVAYYNCTCPEGFSGSNCE) enclose the EGF-like 2; calcium-binding domain. N-linked (GlcNAc...) asparagine glycosylation is present at asparagine 205. Residues 220–256 (NVDECMSNPCQNGGLCRDRTNGYICTCQPGYLGSHCE) form the EGF-like 3; calcium-binding domain. One can recognise an EGF-like 4 domain in the interval 258 to 298 (DVAVCETGTGARCQHGGECIEGPGLEFTCDCPAGWHGRICQ). The EGF-like 5; calcium-binding domain occupies 300 to 336 (EINECASSPCQNGGVCVDKLAAYACACPMGYTGINCE). Residues 338–374 (EILICADNPCQNNALCLMEEGVPTCYCVPDYHGEKCE) form the EGF-like 6 domain. The EGF-like 7; calcium-binding domain occupies 376-413 (QYDECQLGPRCMNGGVCIDGVDTFSCSCPPLLTGMLCE). The N-linked (GlcNAc...) asparagine glycan is linked to asparagine 425. Low complexity-rich tracts occupy residues 429 to 447 (PATQSPPRRTTTTSTMAPP) and 482 to 502 (VTSVLSPSSSSSSSEEGVSVE). 5 disordered regions span residues 429–465 (PATQSPPRRTTTTSTMAPPTVRPVTPPETTVSPSRAS), 482–639 (VTSV…RPTA), 757–783 (RFTTVQPPAGVTTTSPTEDSSVELPTP), 802–854 (LITT…VEIT), and 902–1014 (APPA…GVPE). A compositionally biased stretch (polar residues) spans 514–526 (GSHSISVEQTTAV). Residues 548–560 (SASESETETEEEI) are compositionally biased toward acidic residues. Composition is skewed to low complexity over residues 564 to 582 (TTARPPTSRSSSSSEESPS) and 596 to 632 (TSASSESSGEVVTSEEYTTVPHFEVSGSKSESGSEEV). The span at 757–775 (RFTTVQPPAGVTTTSPTED) shows a compositional bias: polar residues. Basic residues predominate over residues 811-820 (THHHHHHHPH). 2 stretches are compositionally biased toward pro residues: residues 904–922 (PATPAPVPPATTTPPPSPP) and 930–955 (TLPPTLPPVTLPPVTQPPPTIPPTPP). Positions 1018 to 1054 (GDVDCIKLGCYNGGTCVTTSEGSRCVCRFDRQGPLCE) constitute an EGF-like 8 domain. 3 disulfide bridges follow: cysteine 1022-cysteine 1033, cysteine 1027-cysteine 1042, and cysteine 1044-cysteine 1053. One can recognise a Laminin G-like 1 domain in the interval 1059 to 1266 (IRNAAFSGDS…GITECGSLAC (208 aa)). Residues asparagine 1165, asparagine 1170, and asparagine 1176 are each glycosylated (N-linked (GlcNAc...) asparagine). The region spanning 1309–1346 (EISVCEDNPCQYGGTCVQFPGSGYLCLCPLGKHGHYCE) is the EGF-like 9 domain. 3 disulfides stabilise this stretch: cysteine 1313–cysteine 1324, cysteine 1318–cysteine 1334, and cysteine 1336–cysteine 1345. Positions 1353-1549 (LPSFSGSVNG…GVGQCGTREC (197 aa)) constitute a Laminin G-like 2 domain. An N-linked (GlcNAc...) asparagine glycan is attached at asparagine 1471. EGF-like domains are found at residues 1545–1581 (GTRECHRHACQHDGACLQHGATFTCICQEGWYGPLCA) and 1583–1621 (PTNPCDSFNNKCYEDATCVPLVNGYECDCPVGRTGKNCE). Disulfide bonds link cysteine 1549-cysteine 1560, cysteine 1554-cysteine 1569, cysteine 1571-cysteine 1580, cysteine 1587-cysteine 1600, cysteine 1594-cysteine 1609, and cysteine 1611-cysteine 1620. Residues asparagine 1665 and asparagine 1861 are each glycosylated (N-linked (GlcNAc...) asparagine). The Laminin G-like 3 domain occupies 1692 to 1879 (EKQRSFSPVP…NIRDCDGTAC (188 aa)). 2 EGF-like domains span residues 1875-1912 (DGTACGGDSCESGGHCWLDEKLQPHCICPEYAKGDRCE) and 1913-1946 (YSETCKLIPCKNNGRCLRSGRCSCPNGWGGFYCE). Intrachain disulfides connect cysteine 1879-cysteine 1890, cysteine 1884-cysteine 1900, cysteine 1902-cysteine 1911, cysteine 1917-cysteine 1928, cysteine 1922-cysteine 1934, and cysteine 1936-cysteine 1945. The Laminin G-like 4 domain maps to 1952–2166 (PTTPSFRGNS…TYQGENIGSC (215 aa)). N-linked (GlcNAc...) asparagine glycosylation is found at asparagine 1994, asparagine 2035, and asparagine 2099. A disordered region spans residues 2080-2101 (GGRSLGSTTPRSTLAGRRKNSS).

This sequence belongs to the EYS family. In terms of tissue distribution, expressed from the beginning of rhabdomere biogenesis (48 hours after pupal formation), when it decorates the entire photoreceptor apical surface.

The protein localises to the membrane. The protein resides in the secreted. Functionally, essential for the formation of matrix-filled interrhabdomeral space: critical for the formation of epithelial lumina in the retina. Acts together with prominin (prom) and the cell adhesion molecule chaoptin (chp) to choreograph the partitioning of rhabdomeres into an open system. In Drosophila melanogaster (Fruit fly), this protein is Protein eyes shut.